The chain runs to 197 residues: NADH-quinone oxidoreductase subunit B (197 aa).

The [4Fe-4S] cluster site is built by cysteine 76, cysteine 77, cysteine 141, and cysteine 171.

It belongs to the complex I 20 kDa subunit family. NDH-1 is composed of 14 different subunits. Subunits NuoB, C, D, E, F, and G constitute the peripheral sector of the complex. [4Fe-4S] cluster serves as cofactor.

It is found in the cell inner membrane. The catalysed reaction is a quinone + NADH + 5 H(+)(in) = a quinol + NAD(+) + 4 H(+)(out). Functionally, NDH-1 shuttles electrons from NADH, via FMN and iron-sulfur (Fe-S) centers, to quinones in the respiratory chain. The immediate electron acceptor for the enzyme in this species is believed to be ubiquinone. Couples the redox reaction to proton translocation (for every two electrons transferred, four hydrogen ions are translocated across the cytoplasmic membrane), and thus conserves the redox energy in a proton gradient. This is NADH-quinone oxidoreductase subunit B from Methylobacterium nodulans (strain LMG 21967 / CNCM I-2342 / ORS 2060).